Here is a 208-residue protein sequence, read N- to C-terminus: Ubiquitin-conjugating enzyme E2 S (208 aa).

Positions 14–160 (QTIRQVMKEL…ARMMTEIHAQ (147 aa)) constitute a UBC core domain. Catalysis depends on cysteine 98, which acts as the Glycyl thioester intermediate. The disordered stretch occupies residues 161-193 (PAKCGAGASDAKDDDGPSTKKHAGLDKKLQDKK). A compositionally biased stretch (basic and acidic residues) spans 170 to 193 (DAKDDDGPSTKKHAGLDKKLQDKK).

This sequence belongs to the ubiquitin-conjugating enzyme family.

The catalysed reaction is S-ubiquitinyl-[E1 ubiquitin-activating enzyme]-L-cysteine + [E2 ubiquitin-conjugating enzyme]-L-cysteine = [E1 ubiquitin-activating enzyme]-L-cysteine + S-ubiquitinyl-[E2 ubiquitin-conjugating enzyme]-L-cysteine.. It participates in protein modification; protein ubiquitination. Catalyzes the covalent attachment of ubiquitin to other proteins. Acts as an essential factor of the anaphase promoting complex/cyclosome (APC/C), a cell cycle-regulated ubiquitin ligase that controls progression through mitosis. Acts by specifically elongating polyubiquitin chains initiated by the E2 enzyme vih/UbcH10 on APC/C substrates, enhancing the degradation of APC/C substrates by the proteasome and promoting mitotic exit. This is Ubiquitin-conjugating enzyme E2 S from Drosophila virilis (Fruit fly).